The sequence spans 124 residues: Small ribosomal subunit protein bS16 (124 aa).

The segment covering 84–110 (EKAERKNLKKGEPGKAAKERAEKRAAR) has biased composition (basic and acidic residues). The interval 84 to 124 (EKAERKNLKKGEPGKAAKERAEKRAAREAAANAPAEEAASE) is disordered. The span at 111-124 (EAAANAPAEEAASE) shows a compositional bias: low complexity.

It belongs to the bacterial ribosomal protein bS16 family.

The sequence is that of Small ribosomal subunit protein bS16 from Paracoccus denitrificans (strain Pd 1222).